Consider the following 110-residue polypeptide: Protein RnfH (110 aa).

The tract at residues 86 to 110 (RQRRVEKSRQEGSVEGRKWLPKDSR) is disordered. Basic and acidic residues predominate over residues 88–110 (RRVEKSRQEGSVEGRKWLPKDSR).

It belongs to the UPF0125 (RnfH) family.

The polypeptide is Protein RnfH (Paraburkholderia phymatum (strain DSM 17167 / CIP 108236 / LMG 21445 / STM815) (Burkholderia phymatum)).